The sequence spans 160 residues: Small RNA binding protein 1 (160 aa).

The 79-residue stretch at 8 to 86 folds into the RRM domain; the sequence is FRCFVGGLAW…RNITVNEAQQ (79 aa). Residues 82–160 are disordered; sequence NEAQQRGGGG…GGGSEGGWRN (79 aa). A compositionally biased stretch (gly residues) spans 87-160; that stretch reads RGGGGGGGYN…GGGSEGGWRN (74 aa). The interval 88–157 is glycine-rich (GR) required for cell-to-cell movement; the sequence is GGGGGGGYNR…GSGGGGSEGG (70 aa).

The protein belongs to the GR-RBP family. As to quaternary structure, binds to small phloem-mobile single-stranded RNAs (ss-sRNA, e.g. small interfering RNA (siRNA) and microRNA (miRNA)) in the phloeme exudate, including viral-derived sRNA (vsiRNA). In terms of tissue distribution, accumulates in phloem exudates.

Its subcellular location is the secreted. In terms of biological role, possibly has a role in RNA transcription or processing during stress. Binds sequence non-specifically to RNAs and DNAs. Mediates cell-to-cell trafficking of RNA interference (RNAi) signals (small RNAs (sRNA), e.g. small interfering RNA (siRNA) and microRNA (miRNA)) which regulate growth and development, as well as responses to environmental inputs, including pathogen attack; can compromise zucchini yellow mosaic virus (ZYMV) and tobacco rattle virus (TRV) infections at the early stage. The protein is Small RNA binding protein 1 of Cucumis sativus (Cucumber).